We begin with the raw amino-acid sequence, 452 residues long: Mannan endo-1,6-alpha-mannosidase DCW1 (452 aa).

Positions 1–18 (MKFSIYLIISLFSSFSHA) are cleaved as a signal peptide. Residues Asn-25, Asn-81, Asn-106, Asn-130, Asn-200, Asn-237, Asn-240, Asn-262, Asn-271, and Asn-286 are each glycosylated (N-linked (GlcNAc...) asparagine). Gly-431 is lipidated: GPI-anchor amidated glycine. The propeptide at 432 to 452 (AGIITAIIGASLVGSCVWLIL) is removed in mature form.

This sequence belongs to the glycosyl hydrolase 76 family.

It is found in the cell membrane. It catalyses the reaction Random hydrolysis of (1-&gt;6)-alpha-D-mannosidic linkages in unbranched (1-&gt;6)-mannans.. Functionally, probable mannosidase required for normal synthesis of the cell wall. The chain is Mannan endo-1,6-alpha-mannosidase DCW1 (DCW1) from Candida albicans (strain SC5314 / ATCC MYA-2876) (Yeast).